The chain runs to 321 residues: MAKRAEPLPDPACAASDIGQQIVRWLTHLRAERRLSPKTLEAYARDVRQCLMFLGQHWSEQVTLEGFVALEPADIRSFMAARRADDIGGRSLMRSLAGLRSFARFLEREGLGKVGALGAIRAPKVGKSVPKPIHMSAAKRFADASERAGEDREPWIWARDAAVMALLYGSGLRISEALGLKRRDVPPPGAGDVLVVTGKGNKTRMVPVLQNVLALIHEYVAMCPHSLPPEGPIFVGARGGPLRARIIQLVMARMRGALGLPDSATPHALRHSFATHLLSRGGDLRAIQELLGHASLSTTQIYTGIDSERLLDVYRTAHPRA.

The Core-binding (CB) domain occupies 16 to 107; sequence SDIGQQIVRW…GLRSFARFLE (92 aa). Positions 128 to 315 constitute a Tyr recombinase domain; it reads SVPKPIHMSA…DSERLLDVYR (188 aa). Residues arginine 173, lysine 199, histidine 267, arginine 270, and histidine 293 contribute to the active site. The active-site O-(3'-phospho-DNA)-tyrosine intermediate is tyrosine 302.

The protein belongs to the 'phage' integrase family. XerC subfamily. Forms a cyclic heterotetrameric complex composed of two molecules of XerC and two molecules of XerD.

The protein resides in the cytoplasm. Functionally, site-specific tyrosine recombinase, which acts by catalyzing the cutting and rejoining of the recombining DNA molecules. The XerC-XerD complex is essential to convert dimers of the bacterial chromosome into monomers to permit their segregation at cell division. It also contributes to the segregational stability of plasmids. The polypeptide is Tyrosine recombinase XerC (Nitrobacter winogradskyi (strain ATCC 25391 / DSM 10237 / CIP 104748 / NCIMB 11846 / Nb-255)).